The following is a 71-amino-acid chain: DNA-directed RNA polymerase subunit epsilon (71 aa).

This sequence belongs to the RNA polymerase subunit epsilon family. As to quaternary structure, monomer. RNAP is composed of a core of 2 alpha, a beta and a beta' subunit. The core is associated with a delta subunit, and at least one of epsilon or omega. When a sigma factor is associated with the core the holoenzyme is formed, which can initiate transcription.

It carries out the reaction RNA(n) + a ribonucleoside 5'-triphosphate = RNA(n+1) + diphosphate. In terms of biological role, a non-essential component of RNA polymerase (RNAP). Has a similar structure to bacteriophage T7 protein Gp2 (AC P03704), which is known to bind to RNAP in the DNA binding-cleft. Unlike Gp2 however, this protein does not inhibit transcription initiation. The polypeptide is DNA-directed RNA polymerase subunit epsilon (Geobacillus stearothermophilus (strain DSM 13240 / CIP 106956 / 10)).